The sequence spans 224 residues: Fibrillarin-like rRNA/tRNA 2'-O-methyltransferase (224 aa).

Residues 82-83 (TT), 100-101 (EF), 125-126 (DA), and 145-148 (DVAQ) contribute to the S-adenosyl-L-methionine site.

Belongs to the methyltransferase superfamily. Fibrillarin family. In terms of assembly, interacts with nop5. Component of box C/D small ribonucleoprotein (sRNP) particles that contain rpl7ae, FlpA and nop5, plus a guide RNA.

Involved in pre-rRNA and tRNA processing. Utilizes the methyl donor S-adenosyl-L-methionine to catalyze the site-specific 2'-hydroxyl methylation of ribose moieties in rRNA and tRNA. Site specificity is provided by a guide RNA that base pairs with the substrate. Methylation occurs at a characteristic distance from the sequence involved in base pairing with the guide RNA. This is Fibrillarin-like rRNA/tRNA 2'-O-methyltransferase from Methanothermobacter thermautotrophicus (strain ATCC 29096 / DSM 1053 / JCM 10044 / NBRC 100330 / Delta H) (Methanobacterium thermoautotrophicum).